The sequence spans 668 residues: SH2 domain-containing protein B (668 aa).

The interval S373 to D411 is disordered. Over residues V374–N396 the composition is skewed to polar residues. An SH2 domain is found at W574–Y642.

Post-translationally, phosphorylated on tyrosine residues. Expressed in roots, leaves, stems and flowers.

This is SH2 domain-containing protein B from Arabidopsis thaliana (Mouse-ear cress).